Reading from the N-terminus, the 457-residue chain is Bifunctional protein GlmU (457 aa).

Positions 1-230 (MPLSLPLHIV…AQEVEGVNDL (230 aa)) are pyrophosphorylase. UDP-N-acetyl-alpha-D-glucosamine contacts are provided by residues 12-15 (LAAG), Lys-26, Gln-78, 83-84 (GT), 105-107 (YGD), Gly-140, Glu-155, Asn-170, and Asn-228. A Mg(2+)-binding site is contributed by Asp-107. Residue Asn-228 coordinates Mg(2+). The interval 231–251 (WQLTQLERAWQIRAARALCLQ) is linker. Positions 252–457 (GARVADPARL…DGWQRPKKKT (206 aa)) are N-acetyltransferase. 2 residues coordinate UDP-N-acetyl-alpha-D-glucosamine: Arg-334 and Lys-352. The active-site Proton acceptor is the His-364. Positions 367 and 378 each coordinate UDP-N-acetyl-alpha-D-glucosamine. Acetyl-CoA contacts are provided by residues Ala-381, 387–388 (NY), Ser-406, Ala-424, and Arg-441.

It in the N-terminal section; belongs to the N-acetylglucosamine-1-phosphate uridyltransferase family. The protein in the C-terminal section; belongs to the transferase hexapeptide repeat family. As to quaternary structure, homotrimer. The cofactor is Mg(2+).

Its subcellular location is the cytoplasm. The catalysed reaction is alpha-D-glucosamine 1-phosphate + acetyl-CoA = N-acetyl-alpha-D-glucosamine 1-phosphate + CoA + H(+). It catalyses the reaction N-acetyl-alpha-D-glucosamine 1-phosphate + UTP + H(+) = UDP-N-acetyl-alpha-D-glucosamine + diphosphate. It participates in nucleotide-sugar biosynthesis; UDP-N-acetyl-alpha-D-glucosamine biosynthesis; N-acetyl-alpha-D-glucosamine 1-phosphate from alpha-D-glucosamine 6-phosphate (route II): step 2/2. The protein operates within nucleotide-sugar biosynthesis; UDP-N-acetyl-alpha-D-glucosamine biosynthesis; UDP-N-acetyl-alpha-D-glucosamine from N-acetyl-alpha-D-glucosamine 1-phosphate: step 1/1. Its pathway is bacterial outer membrane biogenesis; LPS lipid A biosynthesis. In terms of biological role, catalyzes the last two sequential reactions in the de novo biosynthetic pathway for UDP-N-acetylglucosamine (UDP-GlcNAc). The C-terminal domain catalyzes the transfer of acetyl group from acetyl coenzyme A to glucosamine-1-phosphate (GlcN-1-P) to produce N-acetylglucosamine-1-phosphate (GlcNAc-1-P), which is converted into UDP-GlcNAc by the transfer of uridine 5-monophosphate (from uridine 5-triphosphate), a reaction catalyzed by the N-terminal domain. This is Bifunctional protein GlmU from Xylella fastidiosa (strain M23).